A 1405-amino-acid polypeptide reads, in one-letter code: MKDLLKFLKQQSKTEEFNGIKIGLASPDLIRSWSFGEVKKPETINYRTFKPEREGLFCARIFGPVKDYECLCGKYKRLKHRGVICEKCGVEVTQTKVRRERMGHIDLASPVAHIWFLKSLPSRIGLMLDMTLRDIERVLYFESFVVIEPGMTSLERGQMLTEENYLDALEEYGDEFEAKMGAEAVLELLRAIDLEKEIDMMREELPSINSETRRKKITKRLKLIEAFFQSGNKPEWMILKVLPVLPPDLRPLVPLDGGRFATSDLNDLYRRVINRNNRLKRLLDLAAPDIIVRNEKRMLQESVDALLDNGRRGRAITGSNKRPLKSLADMIKGKQGRFRQNLLGKRVDYSGRSVITVGPTLRLHQCGLPKKMALELFKPFIYGKLEGRGLATTIKAAKKMVEREVPEVWDVLDDVIREHPVMLNRAPTLHRLGIQAFEPVLIEGKAIQLHPLVCAAYNADFDGDQMAVHVPLTLEAQLEARSLMMSTNNILSPANGEPVITPSQDVVLGLYYTSRECVNGKGEGMAFESIDEVEKAYRTKVAAIHARIKVRVTETQIAENGERTESRRIVDTTVGRALLSRILPKGLSYDLVNQNMGKKQISKLLNTCYRQLGLKDTVIFADQLMYAGFHYATVSGASVGINDMVIPDEKYTLVADAEAEVLEIQEQFQSGLVTAGERYNKVIDIWASANEKVSKAMMANLSSETVINRDGEEEEQESFNSIYMMADSGARGSAAQIRQLAGMRGLMAKPDGSIIETPITANFREGLNVSQYFISTHGARKGLADTALKTANSGYLTRRLVDVAQDLVVIEEDCGTFEGLTMKPLIEGGDVVEPLRERVLGRVVAQDVLKPGTEEVLVPRNTLLDEAWCDIVEENSIDEMIVRSVISCDTDFGVCAACYGRDLARGHIINQGEAIGVVAAQSIGEPGTQLTMRTFHIGGAASRASAENNVQVKNLGTLKLHNAKYVTNSVGKLVIVSRSSELAIIDELGREKERYKVPYGTVLEKLEDDAVAAGEIIANWDPHTHPIVSEVAGSIKFVDMIEGVTMTRQTDELTGLSSIVVMEVGQRPSAGKEMRPAICLIGADGNDLMIPGTEVPAQYFLPGNAIVAQDDNAPINVGDALARIPQESSKTRDITGGLPRVADLFEARKPKEPAILAEHSGTISFGKETKGKRRLVITPADGGDHYEEMIPKWRNLNVFEGEKVERGEVIADGAEAAHDILRLRGIHKVANYIVNEVQDVYRLQGVKINDKHIEVIIRQMLRKCEITNAGDSEFLAGEQAEVSRVKIANRELEAQGKQPATFERELLGITKASLATESFISAASFQETTRVLTEAAVGGKSDKLRGLKENVIVGRLIPAGTGYSYHQKRNAETATGTDTEAAPVISASEAEQNLADLLNLAGSSD.

Residues Cys70, Cys72, Cys85, and Cys88 each coordinate Zn(2+). Residues Asp460, Asp462, and Asp464 each contribute to the Mg(2+) site. Zn(2+) is bound by residues Cys814, Cys888, Cys895, and Cys898.

The protein belongs to the RNA polymerase beta' chain family. As to quaternary structure, the RNAP catalytic core consists of 2 alpha, 1 beta, 1 beta' and 1 omega subunit. When a sigma factor is associated with the core the holoenzyme is formed, which can initiate transcription. The cofactor is Mg(2+). Zn(2+) is required as a cofactor.

The enzyme catalyses RNA(n) + a ribonucleoside 5'-triphosphate = RNA(n+1) + diphosphate. Functionally, DNA-dependent RNA polymerase catalyzes the transcription of DNA into RNA using the four ribonucleoside triphosphates as substrates. This chain is DNA-directed RNA polymerase subunit beta', found in Shewanella woodyi (strain ATCC 51908 / MS32).